The sequence spans 241 residues: Synaptogyrin (241 aa).

An MARVEL domain is found at 30-179; the sequence is FAMKPQVVIR…CALMAYKRFL (150 aa). The next 4 membrane-spanning stretches (helical) occupy residues 34-54, 81-101, 115-135, and 155-175; these read PQVV…GCIS, MVGV…FLFE, ADMG…LYLW, and TAIW…LMAY. Positions 216-241 are disordered; sequence ASPFGQPQQGGMEQQQSGMEYQQPTY. The span at 220-241 shows a compositional bias: low complexity; sequence GQPQQGGMEQQQSGMEYQQPTY.

The protein belongs to the synaptogyrin family.

Its subcellular location is the cytoplasmic vesicle membrane. It is found in the cytoplasmic vesicle. The protein localises to the secretory vesicle membrane. The protein resides in the secretory vesicle. It localises to the synaptic vesicle membrane. Required for the correct formation of synaptic vesicles at nerve terminals and has a role in the regulation of the synaptic vesicle exo-endocytic cycle. This is Synaptogyrin from Drosophila melanogaster (Fruit fly).